The primary structure comprises 1588 residues: Paternally-expressed gene 3 protein (1588 aa).

Residues 46 to 128 (HQRFRNLIYV…TLLENYKEMY (83 aa)) form the SCAN box domain. Disordered regions lie at residues 128-230 (YQPE…ESYQ), 266-306 (DGHS…RRGI), and 319-349 (KFIK…MSDD). The span at 129-142 (QPEDDNNSDVTSDD) shows a compositional bias: acidic residues. Basic and acidic residues-rich tracts occupy residues 143-152 (DMTRNRRESS), 161-182 (SGDR…DRWS), 206-225 (FEMD…RSQD), and 295-306 (PEAKKSTHRRGI). 3 consecutive C2H2-type zinc fingers follow at residues 454-476 (YVCD…QIMH), 507-529 (FECK…RKIH), and 565-587 (YECR…QKIH). Residues 588–607 (FGDDKDNEREHERERERGET) show a composition bias toward basic and acidic residues. Positions 588–610 (FGDDKDNEREHERERERGETFRP) are disordered. The C2H2-type 4 zinc-finger motif lies at 627–649 (YECKVCGETFLHSSSLKEHQKIH). The disordered stretch occupies residues 838 to 930 (LVASKPPRSH…EFSVPSSNVR (93 aa)). The segment covering 868 to 881 (LNDKRQKIPARENP) has biased composition (basic and acidic residues). The C2H2-type 5 zinc-finger motif lies at 969 to 991 (YECQECGECFAHSSDLTEHQKIH). The interval 1056 to 1104 (EKSHGEESQGENTDGEETHSEETHGQETIEDPVIQGSDMEDPQKDDPDD) is disordered. Positions 1071-1082 (EETHSEETHGQE) are enriched in basic and acidic residues. 5 consecutive C2H2-type zinc fingers follow at residues 1107–1129 (YECE…QKVH), 1163–1185 (YECP…QRIH), 1225–1247 (IRCL…MRLH), 1282–1304 (FECA…VTVH), and 1332–1354 (YECK…KELH). The segment covering 1395–1415 (AEPEVEAAEPEVEAAEPEVEA) has biased composition (acidic residues). The interval 1395 to 1495 (AEPEVEAAEP…GIEDPEEGED (101 aa)) is disordered. 7 consecutive repeat copies span residues 1397 to 1403 (PEVEAAE), 1404 to 1410 (PEVEAAE), 1411 to 1417 (PEVEAAE), 1418 to 1422 (PNGEA), 1425 to 1429 (PDGEA), 1432 to 1436 (PIGEA), and 1439 to 1443 (PNGEA). The segment at 1397–1417 (PEVEAAEPEVEAAEPEVEAAE) is 3 X 7 AA repeat of P-E-V-E-A-A-E. A 4 X 5 AA repeat of P-X-G-E-A region spans residues 1418 to 1443 (PNGEAEGPDGEAAEPIGEAGQPNGEA). Acidic residues-rich tracts occupy residues 1449–1466 (DADE…ERAE) and 1475–1495 (PEGD…EGED). C2H2-type zinc fingers lie at residues 1505–1527 (YDCH…LKTH) and 1564–1586 (FKCD…QNTH).

Belongs to the krueppel C2H2-type zinc-finger protein family. Homodimer. Interacts with SIAH1A and SIAH2. Interacts with TRAF2.

The protein resides in the nucleus. It localises to the cytoplasm. Induces apoptosis in cooperation with SIAH1A. Acts as a mediator between p53/TP53 and BAX in a neuronal death pathway that is activated by DNA damage. Acts synergistically with TRAF2 and inhibits TNF induced apoptosis through activation of NF-kappa-B. In Pan troglodytes (Chimpanzee), this protein is Paternally-expressed gene 3 protein (PEG3).